We begin with the raw amino-acid sequence, 410 residues long: Cysteine desulfurase IscS (410 aa).

Pyridoxal 5'-phosphate is bound by residues 80–81 (AT), Asn-160, Gln-188, and 208–210 (SGH). Lys-211 bears the N6-(pyridoxal phosphate)lysine mark. Residue Thr-248 participates in pyridoxal 5'-phosphate binding. Cys-334 functions as the Cysteine persulfide intermediate in the catalytic mechanism. Residue Cys-334 coordinates [2Fe-2S] cluster.

The protein belongs to the class-V pyridoxal-phosphate-dependent aminotransferase family. NifS/IscS subfamily. Homodimer. Forms a heterotetramer with IscU, interacts with other sulfur acceptors. Pyridoxal 5'-phosphate serves as cofactor.

The protein localises to the cytoplasm. The catalysed reaction is (sulfur carrier)-H + L-cysteine = (sulfur carrier)-SH + L-alanine. Its pathway is cofactor biosynthesis; iron-sulfur cluster biosynthesis. Master enzyme that delivers sulfur to a number of partners involved in Fe-S cluster assembly, tRNA modification or cofactor biosynthesis. Catalyzes the removal of elemental sulfur atoms from cysteine to produce alanine. Functions as a sulfur delivery protein for Fe-S cluster synthesis onto IscU, an Fe-S scaffold assembly protein, as well as other S acceptor proteins. The polypeptide is Cysteine desulfurase IscS (Rickettsia akari (strain Hartford)).